The sequence spans 186 residues: Large ribosomal subunit protein uL10 (186 aa).

The protein belongs to the universal ribosomal protein uL10 family. As to quaternary structure, part of the ribosomal stalk of the 50S ribosomal subunit. The N-terminus interacts with L11 and the large rRNA to form the base of the stalk. The C-terminus forms an elongated spine to which L12 dimers bind in a sequential fashion forming a multimeric L10(L12)X complex.

In terms of biological role, forms part of the ribosomal stalk, playing a central role in the interaction of the ribosome with GTP-bound translation factors. In Nitrosococcus oceani (strain ATCC 19707 / BCRC 17464 / JCM 30415 / NCIMB 11848 / C-107), this protein is Large ribosomal subunit protein uL10.